The chain runs to 337 residues: Ketol-acid reductoisomerase (NADP(+)) (337 aa).

In terms of domain architecture, KARI N-terminal Rossmann spans 1-180; that stretch reads MQVYYDKDAD…GGTKGGVIET (180 aa). Residues 24 to 27, Arg-47, and Ser-51 contribute to the NADP(+) site; that span reads YGSQ. The active site involves His-106. Gly-132 is a binding site for NADP(+). In terms of domain architecture, KARI C-terminal knotted spans 181-326; it reads TFREETETDL…AQLRAMMPWI (146 aa). Residues Asp-189, Glu-193, Glu-225, and Glu-229 each contribute to the Mg(2+) site. Ser-250 is a binding site for substrate.

Belongs to the ketol-acid reductoisomerase family. Requires Mg(2+) as cofactor.

The enzyme catalyses (2R)-2,3-dihydroxy-3-methylbutanoate + NADP(+) = (2S)-2-acetolactate + NADPH + H(+). The catalysed reaction is (2R,3R)-2,3-dihydroxy-3-methylpentanoate + NADP(+) = (S)-2-ethyl-2-hydroxy-3-oxobutanoate + NADPH + H(+). It functions in the pathway amino-acid biosynthesis; L-isoleucine biosynthesis; L-isoleucine from 2-oxobutanoate: step 2/4. Its pathway is amino-acid biosynthesis; L-valine biosynthesis; L-valine from pyruvate: step 2/4. In terms of biological role, involved in the biosynthesis of branched-chain amino acids (BCAA). Catalyzes an alkyl-migration followed by a ketol-acid reduction of (S)-2-acetolactate (S2AL) to yield (R)-2,3-dihydroxy-isovalerate. In the isomerase reaction, S2AL is rearranged via a Mg-dependent methyl migration to produce 3-hydroxy-3-methyl-2-ketobutyrate (HMKB). In the reductase reaction, this 2-ketoacid undergoes a metal-dependent reduction by NADPH to yield (R)-2,3-dihydroxy-isovalerate. This is Ketol-acid reductoisomerase (NADP(+)) from Neisseria meningitidis serogroup C (strain 053442).